The primary structure comprises 741 residues: MMLSCSPLTVPSSSYPFHFLPSSSDPPYDSIRNHPSLSLLHNCKTLQSLRIIHAQMIKIGLHNTNYALSKLIEFCILSPHFEGLPYAISVFKTIQEPNLLIWNTMFRGHALSSDPVSALKLYVCMISLGLLPNSYTFPFVLKSCAKSKAFKEGQQIHGHVLKLGCDLDLYVHTSLISMYVQNGRLEDAHKVFDKSPHRDVVSYTALIKGYASRGYIENAQKLFDEIPVKDVVSWNAMISGYAETGNYKEALELFKDMMKTNVRPDESTMVTVVSACAQSGSIELGRQVHLWIDDHGFGSNLKIVNALIDLYSKCGELETACGLFERLPYKDVISWNTLIGGYTHMNLYKEALLLFQEMLRSGETPNDVTMLSILPACAHLGAIDIGRWIHVYIDKRLKGVTNASSLRTSLIDMYAKCGDIEAAHQVFNSILHKSLSSWNAMIFGFAMHGRADASFDLFSRMRKIGIQPDDITFVGLLSACSHSGMLDLGRHIFRTMTQDYKMTPKLEHYGCMIDLLGHSGLFKEAEEMINMMEMEPDGVIWCSLLKACKMHGNVELGESFAENLIKIEPENPGSYVLLSNIYASAGRWNEVAKTRALLNDKGMKKVPGCSSIEIDSVVHEFIIGDKFHPRNREIYGMLEEMEVLLEKAGFVPDTSEVLQEMEEEWKEGALRHHSEKLAIAFGLISTKPGTKLTIVKNLRVCRNCHEATKLISKIYKREIIARDRTRFHHFRDGVCSCNDYW.

PPR repeat units lie at residues Asn-98 to Pro-132, Asn-133 to Leu-167, Asp-168 to Ser-202, Tyr-203 to Lys-229, Asp-230 to Pro-264, Asp-265 to Ser-299, Asn-300 to Lys-330, Asp-331 to Pro-365, Asn-366 to Arg-396, Ala-403 to Lys-433, Ser-434 to Pro-468, Asp-469 to Asp-499, and Lys-505 to Glu-535. Residues Ile-540–Asp-615 are type E motif. A type E(+) motif region spans residues Ser-616 to Glu-646. A type DYW motif region spans residues Lys-647–Trp-741.

Belongs to the PPR family. PCMP-H subfamily. Interacts with ORRM1. Interacts with VAR3/OZ1.

It localises to the plastid. The protein resides in the chloroplast. Its function is as follows. Involved in multiple sites RNA editing events in chloroplasts. Involved in the editing of the site 9 of ndhB (ndhB-9) and site 1 of ndhG (ndhG-1) transcripts, which are two plastid-encoded subunits of the chloroplast NAD(P)H dehydrogenase (NDH) complex. Not essential for the activity of the NDH complex of the photosynthetic electron transport chain. This is Pentatricopeptide repeat-containing protein At1g08070, chloroplastic (PCMP-H12) from Arabidopsis thaliana (Mouse-ear cress).